The following is a 117-amino-acid chain: MNKEIIEVFDNTYPDRDYTIEIINPEFTSVCPKTGLPDFGTITVNYVPDKSCIELKSLKYYFLEFRNAGIFYENITNRILDDLVEACQPRRMTVKTEWNARGGITETVTVSYSKSKE.

Cysteine 31 serves as the catalytic Thioimide intermediate. Aspartate 38 functions as the Proton donor in the catalytic mechanism. Substrate is bound by residues 53 to 55 (IEL) and 72 to 73 (YE).

It belongs to the GTP cyclohydrolase I family. QueF type 1 subfamily.

Its subcellular location is the cytoplasm. The enzyme catalyses 7-aminomethyl-7-carbaguanine + 2 NADP(+) = 7-cyano-7-deazaguanine + 2 NADPH + 3 H(+). It participates in tRNA modification; tRNA-queuosine biosynthesis. Functionally, catalyzes the NADPH-dependent reduction of 7-cyano-7-deazaguanine (preQ0) to 7-aminomethyl-7-deazaguanine (preQ1). The polypeptide is NADPH-dependent 7-cyano-7-deazaguanine reductase (Chlorobaculum tepidum (strain ATCC 49652 / DSM 12025 / NBRC 103806 / TLS) (Chlorobium tepidum)).